Consider the following 717-residue polypeptide: Glutamine--fructose-6-phosphate aminotransferase [isomerizing] (717 aa).

Cys-2 serves as the catalytic For GATase activity. The 317-residue stretch at 2 to 318 (CGIFGYCNYL…DDDLAHIYDG (317 aa)) folds into the Glutamine amidotransferase type-2 domain. The residue at position 253 (Ser-253) is a Phosphoserine. Position 334 is a phosphothreonine (Thr-334). Ser-336 is subject to Phosphoserine. 2 consecutive SIS domains span residues 390–529 (WLPV…DRVS) and 562–707 (CATE…VDFP).

It carries out the reaction D-fructose 6-phosphate + L-glutamine = D-glucosamine 6-phosphate + L-glutamate. Its pathway is nucleotide-sugar biosynthesis; UDP-N-acetyl-alpha-D-glucosamine biosynthesis; alpha-D-glucosamine 6-phosphate from D-fructose 6-phosphate: step 1/1. In terms of biological role, involved in amino sugar synthesis (formation of chitin, supplies the amino sugars of asparagine-linked oligosaccharides of glycoproteins). The chain is Glutamine--fructose-6-phosphate aminotransferase [isomerizing] (GFA1) from Saccharomyces cerevisiae (strain ATCC 204508 / S288c) (Baker's yeast).